The chain runs to 380 residues: Succinate--CoA ligase [ADP-forming] subunit beta (380 aa).

The ATP-grasp domain occupies 9-236 (KGVFADAGIP…EAAGDELEAK (228 aa)). Residues lysine 45, 52 to 54 (GRG), glutamate 91, valine 94, and glutamate 99 contribute to the ATP site. Residues asparagine 191 and aspartate 205 each contribute to the Mg(2+) site. Substrate-binding positions include asparagine 256 and 313–315 (GIT).

It belongs to the succinate/malate CoA ligase beta subunit family. In terms of assembly, heterotetramer of two alpha and two beta subunits. The cofactor is Mg(2+).

It carries out the reaction succinate + ATP + CoA = succinyl-CoA + ADP + phosphate. The catalysed reaction is GTP + succinate + CoA = succinyl-CoA + GDP + phosphate. The protein operates within carbohydrate metabolism; tricarboxylic acid cycle; succinate from succinyl-CoA (ligase route): step 1/1. Succinyl-CoA synthetase functions in the citric acid cycle (TCA), coupling the hydrolysis of succinyl-CoA to the synthesis of either ATP or GTP and thus represents the only step of substrate-level phosphorylation in the TCA. The beta subunit provides nucleotide specificity of the enzyme and binds the substrate succinate, while the binding sites for coenzyme A and phosphate are found in the alpha subunit. This is Succinate--CoA ligase [ADP-forming] subunit beta from Natronomonas pharaonis (strain ATCC 35678 / DSM 2160 / CIP 103997 / JCM 8858 / NBRC 14720 / NCIMB 2260 / Gabara) (Halobacterium pharaonis).